The chain runs to 638 residues: Chaperone protein DnaK (638 aa).

Position 198 is a phosphothreonine; by autocatalysis (Thr198). Residues 603–618 (QQAQAQQAQGADADAQ) are compositionally biased toward low complexity. The interval 603–638 (QQAQAQQAQGADADAQQSKEDDVVDAEFEEVKDDKK) is disordered. Positions 624–638 (DVVDAEFEEVKDDKK) are enriched in acidic residues.

It belongs to the heat shock protein 70 family.

Its function is as follows. Acts as a chaperone. This Vibrio campbellii (strain ATCC BAA-1116) protein is Chaperone protein DnaK.